Consider the following 373-residue polypeptide: tRNA-specific 2-thiouridylase MnmA (373 aa).

Residues 12-19 (GMSGGVDS) and Met-38 each bind ATP. The segment at 98-100 (NPD) is interaction with target base in tRNA. Cys-103 functions as the Nucleophile in the catalytic mechanism. The cysteines at positions 103 and 200 are disulfide-linked. Gly-127 provides a ligand contact to ATP. Residues 150–152 (KDQ) form an interaction with tRNA region. The Cysteine persulfide intermediate role is filled by Cys-200. Residues 312–313 (RY) are interaction with tRNA.

Belongs to the MnmA/TRMU family.

The protein localises to the cytoplasm. It catalyses the reaction S-sulfanyl-L-cysteinyl-[protein] + uridine(34) in tRNA + AH2 + ATP = 2-thiouridine(34) in tRNA + L-cysteinyl-[protein] + A + AMP + diphosphate + H(+). Functionally, catalyzes the 2-thiolation of uridine at the wobble position (U34) of tRNA, leading to the formation of s(2)U34. In Streptococcus pyogenes serotype M28 (strain MGAS6180), this protein is tRNA-specific 2-thiouridylase MnmA.